The sequence spans 361 residues: Phospho-N-acetylmuramoyl-pentapeptide-transferase (361 aa).

10 consecutive transmembrane segments (helical) span residues 27–47 (GAFFTALIFGFIFGRPLINLL), 72–92 (TPTMGGLLILSALTLATLLWA), 98–118 (YVWLVLFVTVSFGLIGFMDDF), 135–155 (LAMGFGIAGIAGAGALLLHPE), 169–189 (TLINLSILFIPFCMIVIAGSA), 200–220 (GLAIMPVMIAAGTLGVIAYAV), 240–260 (IFVFTSALIGGGLGFLWYNAP), 263–283 (AVFMGDTGSLALGGALGAIAV), 289–309 (IVLVVVGGIFVVEALSVIIQV), and 338–358 (QIVIRFWIISLILALIGLATL).

Belongs to the glycosyltransferase 4 family. MraY subfamily. Requires Mg(2+) as cofactor.

It localises to the cell inner membrane. It carries out the reaction UDP-N-acetyl-alpha-D-muramoyl-L-alanyl-gamma-D-glutamyl-meso-2,6-diaminopimeloyl-D-alanyl-D-alanine + di-trans,octa-cis-undecaprenyl phosphate = di-trans,octa-cis-undecaprenyl diphospho-N-acetyl-alpha-D-muramoyl-L-alanyl-D-glutamyl-meso-2,6-diaminopimeloyl-D-alanyl-D-alanine + UMP. Its pathway is cell wall biogenesis; peptidoglycan biosynthesis. Functionally, catalyzes the initial step of the lipid cycle reactions in the biosynthesis of the cell wall peptidoglycan: transfers peptidoglycan precursor phospho-MurNAc-pentapeptide from UDP-MurNAc-pentapeptide onto the lipid carrier undecaprenyl phosphate, yielding undecaprenyl-pyrophosphoryl-MurNAc-pentapeptide, known as lipid I. The chain is Phospho-N-acetylmuramoyl-pentapeptide-transferase from Dinoroseobacter shibae (strain DSM 16493 / NCIMB 14021 / DFL 12).